The following is a 338-amino-acid chain: MLAKITRSSFYASRAVGRLSGSIPTSPAALASNCRYIQIERKRTKSHEMALYETVEKGAKNSPSYSLYFKNKCGNVISPMHDIPLYANEEKTIYNMVVEVPRWTNAKMEISLKTPMNPIKQDIKKGKLRFVANCFPHKGYIWNYGALPQTWENPDHIEPSTGCKGDNDPIDVIEIGYRVAKRGDVLKVKVLGTIALIDEGETDWKIIAIDVNDPLASKVNDIADVDQYFPGLLRATVEWFKIYKIPDGKPENQFAFNGDAKNADFANTIIAETHKFWQNLVHQSPASGSISTTNITNRNSEHVIPKEEAEKILAEAPDGGQVEEVSDTVDTWHFIHLK.

R129 serves as a coordination point for diphosphate. The Mg(2+) site is built by D166, D171, and D203.

This sequence belongs to the PPase family. As to quaternary structure, component of the NURF complex composed of Caf1-55, E(bx), Nurf-38 and Iswi. Requires Mg(2+) as cofactor.

It localises to the cytoplasm. Its subcellular location is the nucleus. It carries out the reaction diphosphate + H2O = 2 phosphate + H(+). Its function is as follows. Component of NURF (nucleosome remodeling factor), a complex which catalyzes ATP-dependent nucleosome sliding and facilitates transcription of chromatin. NURF is required for homeotic gene expression, proper larval blood cell development, normal male X chromosome morphology, ecdysteroid signaling and metamorphosis. Inorganic pyrophosphatase (PPase), hydrolyzes inorganic pyrophosphate to inorganic phosphate, essential for driving critical biosynthetic reactions including transcription, replication, and DNA repair. The sequence is that of Inorganic pyrophosphatase (Nurf-38) from Drosophila melanogaster (Fruit fly).